A 164-amino-acid chain; its full sequence is Peptide methionine sulfoxide reductase MsrA (164 aa).

C16 is a catalytic residue.

The protein belongs to the MsrA Met sulfoxide reductase family.

It catalyses the reaction L-methionyl-[protein] + [thioredoxin]-disulfide + H2O = L-methionyl-(S)-S-oxide-[protein] + [thioredoxin]-dithiol. The catalysed reaction is [thioredoxin]-disulfide + L-methionine + H2O = L-methionine (S)-S-oxide + [thioredoxin]-dithiol. In terms of biological role, has an important function as a repair enzyme for proteins that have been inactivated by oxidation. Catalyzes the reversible oxidation-reduction of methionine sulfoxide in proteins to methionine. The protein is Peptide methionine sulfoxide reductase MsrA of Methanoculleus marisnigri (strain ATCC 35101 / DSM 1498 / JR1).